The following is a 1165-amino-acid chain: Autophagy-related protein 11 (1165 aa).

Coiled-coil stretches lie at residues 239–304 (NKLN…YKNM) and 670–853 (DNIR…KQKK).

The protein belongs to the ATG11 family. Homodimer and potential homooligomers.

It is found in the preautophagosomal structure membrane. Plays an essential role in both non-selective and selective autophagy such as mitophagy. Recruits mitochondria for their selective degradation via autophagy (mitophagy) during starvation, through its interaction with ATG32. Works as scaffold proteins that recruit ATG proteins to the pre-autophagosome (PAS), the site of vesicle/autophagosome formation. Required for ATG9 anterograde transport from the mitochondria to the PAS. This Candida albicans (strain SC5314 / ATCC MYA-2876) (Yeast) protein is Autophagy-related protein 11.